The sequence spans 522 residues: Cytochrome P450 1A1 (522 aa).

Phe-229 lines the substrate pocket. Cys-463 is a binding site for heme.

It belongs to the cytochrome P450 family. It depends on heme as a cofactor. In terms of tissue distribution, liver.

The protein localises to the endoplasmic reticulum membrane. It is found in the microsome membrane. It catalyses the reaction an organic molecule + reduced [NADPH--hemoprotein reductase] + O2 = an alcohol + oxidized [NADPH--hemoprotein reductase] + H2O + H(+). Functionally, cytochromes P450 are a group of heme-thiolate monooxygenases. They oxidize a variety of structurally unrelated compounds, including steroids, fatty acids, and xenobiotics. This chain is Cytochrome P450 1A1 (cyp1a1), found in Oncorhynchus mykiss (Rainbow trout).